Here is a 194-residue protein sequence, read N- to C-terminus: Phosphoheptose isomerase (194 aa).

Positions 37 to 194 constitute an SIS domain; it reads ISNSFKQGGK…LIEFEMAKQA (158 aa). 52–54 contributes to the substrate binding site; sequence NGG. 2 residues coordinate Zn(2+): histidine 61 and glutamate 65. Substrate contacts are provided by residues glutamate 65, 93-94, 119-121, serine 124, and glutamine 172; these read ND and STS. Zn(2+) is bound by residues glutamine 172 and histidine 180.

It belongs to the SIS family. GmhA subfamily. Homotetramer. The cofactor is Zn(2+).

The protein localises to the cytoplasm. It catalyses the reaction 2 D-sedoheptulose 7-phosphate = D-glycero-alpha-D-manno-heptose 7-phosphate + D-glycero-beta-D-manno-heptose 7-phosphate. The protein operates within carbohydrate biosynthesis; D-glycero-D-manno-heptose 7-phosphate biosynthesis; D-glycero-alpha-D-manno-heptose 7-phosphate and D-glycero-beta-D-manno-heptose 7-phosphate from sedoheptulose 7-phosphate: step 1/1. Functionally, catalyzes the isomerization of sedoheptulose 7-phosphate in D-glycero-D-manno-heptose 7-phosphate. The protein is Phosphoheptose isomerase of Actinobacillus pleuropneumoniae serotype 5b (strain L20).